Reading from the N-terminus, the 1413-residue chain is DNA-directed RNA polymerase subunit beta' (1413 aa).

The Zn(2+) site is built by cysteine 70, cysteine 72, cysteine 85, and cysteine 88. Residues aspartate 460, aspartate 462, and aspartate 464 each coordinate Mg(2+). Zn(2+) is bound by residues cysteine 814, cysteine 888, cysteine 895, and cysteine 898.

The protein belongs to the RNA polymerase beta' chain family. As to quaternary structure, the RNAP catalytic core consists of 2 alpha, 1 beta, 1 beta' and 1 omega subunit. When a sigma factor is associated with the core the holoenzyme is formed, which can initiate transcription. Mg(2+) is required as a cofactor. Zn(2+) serves as cofactor.

The catalysed reaction is RNA(n) + a ribonucleoside 5'-triphosphate = RNA(n+1) + diphosphate. Functionally, DNA-dependent RNA polymerase catalyzes the transcription of DNA into RNA using the four ribonucleoside triphosphates as substrates. This chain is DNA-directed RNA polymerase subunit beta', found in Bordetella avium (strain 197N).